The primary structure comprises 311 residues: 1D-myo-inositol 2-acetamido-2-deoxy-alpha-D-glucopyranoside deacetylase (311 aa).

The Zn(2+) site is built by H29, D32, and H162.

The protein belongs to the MshB deacetylase family. The cofactor is Zn(2+).

The catalysed reaction is 1D-myo-inositol 2-acetamido-2-deoxy-alpha-D-glucopyranoside + H2O = 1D-myo-inositol 2-amino-2-deoxy-alpha-D-glucopyranoside + acetate. Its function is as follows. Catalyzes the deacetylation of 1D-myo-inositol 2-acetamido-2-deoxy-alpha-D-glucopyranoside (GlcNAc-Ins) in the mycothiol biosynthesis pathway. The chain is 1D-myo-inositol 2-acetamido-2-deoxy-alpha-D-glucopyranoside deacetylase from Corynebacterium efficiens (strain DSM 44549 / YS-314 / AJ 12310 / JCM 11189 / NBRC 100395).